A 128-amino-acid chain; its full sequence is S-adenosylmethionine decarboxylase proenzyme (128 aa).

Ser-61 acts as the Schiff-base intermediate with substrate; via pyruvic acid in catalysis. Ser-61 is modified (pyruvic acid (Ser); by autocatalysis). The active-site Proton acceptor; for processing activity is the His-66. The Proton donor; for catalytic activity role is filled by Cys-81.

The protein belongs to the prokaryotic AdoMetDC family. Type 1 subfamily. Heterotetramer of two alpha and two beta chains arranged as a dimer of alpha/beta heterodimers. Pyruvate serves as cofactor. Post-translationally, is synthesized initially as an inactive proenzyme. Formation of the active enzyme involves a self-maturation process in which the active site pyruvoyl group is generated from an internal serine residue via an autocatalytic post-translational modification. Two non-identical subunits are generated from the proenzyme in this reaction, and the pyruvate is formed at the N-terminus of the alpha chain, which is derived from the carboxyl end of the proenzyme. The post-translation cleavage follows an unusual pathway, termed non-hydrolytic serinolysis, in which the side chain hydroxyl group of the serine supplies its oxygen atom to form the C-terminus of the beta chain, while the remainder of the serine residue undergoes an oxidative deamination to produce ammonia and the pyruvoyl group blocking the N-terminus of the alpha chain.

It carries out the reaction S-adenosyl-L-methionine + H(+) = S-adenosyl 3-(methylsulfanyl)propylamine + CO2. It functions in the pathway amine and polyamine biosynthesis; S-adenosylmethioninamine biosynthesis; S-adenosylmethioninamine from S-adenosyl-L-methionine: step 1/1. Functionally, catalyzes the decarboxylation of S-adenosylmethionine to S-adenosylmethioninamine (dcAdoMet), the propylamine donor required for the synthesis of the polyamines spermine and spermidine from the diamine putrescine. The chain is S-adenosylmethionine decarboxylase proenzyme from Parasynechococcus marenigrum (strain WH8102).